A 491-amino-acid polypeptide reads, in one-letter code: Glutamyl-tRNA(Gln) amidotransferase subunit A (491 aa).

Active-site charge relay system residues include K79 and S154. Catalysis depends on S178, which acts as the Acyl-ester intermediate.

It belongs to the amidase family. GatA subfamily. In terms of assembly, heterotrimer of A, B and C subunits.

The enzyme catalyses L-glutamyl-tRNA(Gln) + L-glutamine + ATP + H2O = L-glutaminyl-tRNA(Gln) + L-glutamate + ADP + phosphate + H(+). In terms of biological role, allows the formation of correctly charged Gln-tRNA(Gln) through the transamidation of misacylated Glu-tRNA(Gln) in organisms which lack glutaminyl-tRNA synthetase. The reaction takes place in the presence of glutamine and ATP through an activated gamma-phospho-Glu-tRNA(Gln). This chain is Glutamyl-tRNA(Gln) amidotransferase subunit A, found in Synechococcus sp. (strain CC9902).